A 571-amino-acid polypeptide reads, in one-letter code: 2-succinyl-5-enolpyruvyl-6-hydroxy-3-cyclohexene-1-carboxylate synthase (571 aa).

Belongs to the TPP enzyme family. MenD subfamily. As to quaternary structure, homodimer. Mg(2+) serves as cofactor. The cofactor is Mn(2+). Thiamine diphosphate is required as a cofactor.

It carries out the reaction isochorismate + 2-oxoglutarate + H(+) = 5-enolpyruvoyl-6-hydroxy-2-succinyl-cyclohex-3-ene-1-carboxylate + CO2. It participates in quinol/quinone metabolism; 1,4-dihydroxy-2-naphthoate biosynthesis; 1,4-dihydroxy-2-naphthoate from chorismate: step 2/7. Its pathway is quinol/quinone metabolism; menaquinone biosynthesis. Functionally, catalyzes the thiamine diphosphate-dependent decarboxylation of 2-oxoglutarate and the subsequent addition of the resulting succinic semialdehyde-thiamine pyrophosphate anion to isochorismate to yield 2-succinyl-5-enolpyruvyl-6-hydroxy-3-cyclohexene-1-carboxylate (SEPHCHC). In Lysinibacillus sphaericus (strain C3-41), this protein is 2-succinyl-5-enolpyruvyl-6-hydroxy-3-cyclohexene-1-carboxylate synthase.